We begin with the raw amino-acid sequence, 277 residues long: Diaminopimelate epimerase (277 aa).

Substrate is bound by residues N15, Q48, and N66. The Proton donor role is filled by C75. Substrate-binding positions include 76-77 (GN), N156, N189, and 207-208 (ER). C216 acts as the Proton acceptor in catalysis. Substrate is bound at residue 217 to 218 (GS).

The protein belongs to the diaminopimelate epimerase family. In terms of assembly, homodimer.

It is found in the cytoplasm. The enzyme catalyses (2S,6S)-2,6-diaminopimelate = meso-2,6-diaminopimelate. The protein operates within amino-acid biosynthesis; L-lysine biosynthesis via DAP pathway; DL-2,6-diaminopimelate from LL-2,6-diaminopimelate: step 1/1. Catalyzes the stereoinversion of LL-2,6-diaminopimelate (L,L-DAP) to meso-diaminopimelate (meso-DAP), a precursor of L-lysine and an essential component of the bacterial peptidoglycan. The sequence is that of Diaminopimelate epimerase from Acidiphilium cryptum (strain JF-5).